The following is a 166-amino-acid chain: Cytochrome c-type biogenesis protein CcmE (166 aa).

The Cytoplasmic segment spans residues 1–8; that stretch reads MNAVRRKK. A helical; Signal-anchor for type II membrane protein membrane pass occupies residues 9 to 29; sequence LMWVMFTLAGAVIAVALVIYA. Over 30–166 the chain is Periplasmic; it reads IGKQTDYYFD…KLHETKTLQQ (137 aa). 2 residues coordinate heme: His124 and Tyr128. The segment at 133–166 is disordered; that stretch reads VAKSMKENNRSGAVPSSEQYNPAEKLHETKTLQQ. Over residues 142-152 the composition is skewed to polar residues; the sequence is RSGAVPSSEQY. Residues 156-166 are compositionally biased toward basic and acidic residues; that stretch reads EKLHETKTLQQ.

The protein belongs to the CcmE/CycJ family.

Its subcellular location is the cell inner membrane. Functionally, heme chaperone required for the biogenesis of c-type cytochromes. Transiently binds heme delivered by CcmC and transfers the heme to apo-cytochromes in a process facilitated by CcmF and CcmH. The polypeptide is Cytochrome c-type biogenesis protein CcmE (Psychrobacter arcticus (strain DSM 17307 / VKM B-2377 / 273-4)).